A 258-amino-acid chain; its full sequence is 3-deoxy-manno-octulosonate cytidylyltransferase (258 aa).

It belongs to the KdsB family.

The protein resides in the cytoplasm. It carries out the reaction 3-deoxy-alpha-D-manno-oct-2-ulosonate + CTP = CMP-3-deoxy-beta-D-manno-octulosonate + diphosphate. It participates in nucleotide-sugar biosynthesis; CMP-3-deoxy-D-manno-octulosonate biosynthesis; CMP-3-deoxy-D-manno-octulosonate from 3-deoxy-D-manno-octulosonate and CTP: step 1/1. The protein operates within bacterial outer membrane biogenesis; lipopolysaccharide biosynthesis. Functionally, activates KDO (a required 8-carbon sugar) for incorporation into bacterial lipopolysaccharide in Gram-negative bacteria. The sequence is that of 3-deoxy-manno-octulosonate cytidylyltransferase from Parvibaculum lavamentivorans (strain DS-1 / DSM 13023 / NCIMB 13966).